Here is a 326-residue protein sequence, read N- to C-terminus: Alkanal monooxygenase beta chain (326 aa).

It belongs to the bacterial luciferase oxidoreductase family. As to quaternary structure, heterodimer of an alpha and a beta chain.

The catalysed reaction is a long-chain fatty aldehyde + FMNH2 + O2 = a long-chain fatty acid + hnu + FMN + H2O + 2 H(+). Its function is as follows. Light-emitting reaction in luminous bacteria. The specific role of the beta subunit is unknown, but it is absolutely required for bioluminescence activity. The protein is Alkanal monooxygenase beta chain (luxB) of Aliivibrio fischeri (Vibrio fischeri).